A 156-amino-acid chain; its full sequence is Arginine repressor (156 aa).

Belongs to the ArgR family.

Its subcellular location is the cytoplasm. Its pathway is amino-acid biosynthesis; L-arginine biosynthesis [regulation]. In terms of biological role, regulates arginine biosynthesis genes. In Erwinia tasmaniensis (strain DSM 17950 / CFBP 7177 / CIP 109463 / NCPPB 4357 / Et1/99), this protein is Arginine repressor.